The primary structure comprises 281 residues: Diaminopimelate epimerase (281 aa).

2 residues coordinate substrate: Asn-13 and Asn-66. Cys-75 serves as the catalytic Proton donor. Substrate is bound by residues Gly-76–Asn-77, Asn-164, Asn-197, and Glu-215–Arg-216. Cys-224 functions as the Proton acceptor in the catalytic mechanism. Gly-225 to Thr-226 is a binding site for substrate.

This sequence belongs to the diaminopimelate epimerase family. Homodimer.

The protein localises to the cytoplasm. The catalysed reaction is (2S,6S)-2,6-diaminopimelate = meso-2,6-diaminopimelate. It participates in amino-acid biosynthesis; L-lysine biosynthesis via DAP pathway; DL-2,6-diaminopimelate from LL-2,6-diaminopimelate: step 1/1. Its function is as follows. Catalyzes the stereoinversion of LL-2,6-diaminopimelate (L,L-DAP) to meso-diaminopimelate (meso-DAP), a precursor of L-lysine and an essential component of the bacterial peptidoglycan. The protein is Diaminopimelate epimerase of Rippkaea orientalis (strain PCC 8801 / RF-1) (Cyanothece sp. (strain PCC 8801)).